Here is a 535-residue protein sequence, read N- to C-terminus: CTP synthase (535 aa).

The tract at residues 1–267 (MTKFIFVTGG…DDIVIKKLGL (267 aa)) is amidoligase domain. Residue Ser-13 coordinates CTP. Ser-13 serves as a coordination point for UTP. An ATP-binding site is contributed by 14 to 19 (SLGKGI). Position 54 (Tyr-54) interacts with L-glutamine. Asp-71 provides a ligand contact to ATP. Residues Asp-71 and Glu-141 each contribute to the Mg(2+) site. Residues 148 to 150 (DIE), 188 to 193 (KTKPTQ), and Lys-224 each bind CTP. Residues 188–193 (KTKPTQ) and Lys-224 each bind UTP. The Glutamine amidotransferase type-1 domain maps to 292 to 534 (TIGIVGKYVS…IGASLKTNKL (243 aa)). Gly-354 contributes to the L-glutamine binding site. Cys-381 serves as the catalytic Nucleophile; for glutamine hydrolysis. Residues 382–385 (LGMQ), Glu-405, and Arg-462 each bind L-glutamine. Residues His-507 and Glu-509 contribute to the active site.

It belongs to the CTP synthase family. As to quaternary structure, homotetramer.

It carries out the reaction UTP + L-glutamine + ATP + H2O = CTP + L-glutamate + ADP + phosphate + 2 H(+). The catalysed reaction is L-glutamine + H2O = L-glutamate + NH4(+). The enzyme catalyses UTP + NH4(+) + ATP = CTP + ADP + phosphate + 2 H(+). Its pathway is pyrimidine metabolism; CTP biosynthesis via de novo pathway; CTP from UDP: step 2/2. Its activity is regulated as follows. Allosterically activated by GTP, when glutamine is the substrate; GTP has no effect on the reaction when ammonia is the substrate. The allosteric effector GTP functions by stabilizing the protein conformation that binds the tetrahedral intermediate(s) formed during glutamine hydrolysis. Inhibited by the product CTP, via allosteric rather than competitive inhibition. In terms of biological role, catalyzes the ATP-dependent amination of UTP to CTP with either L-glutamine or ammonia as the source of nitrogen. Regulates intracellular CTP levels through interactions with the four ribonucleotide triphosphates. This is CTP synthase from Carboxydothermus hydrogenoformans (strain ATCC BAA-161 / DSM 6008 / Z-2901).